The primary structure comprises 891 residues: Valine--tRNA ligase (891 aa).

The 'HIGH' region signature appears at 43–53 (PFTSGTLHLGH). The short motif at 536 to 540 (KMSKS) is the 'KMSKS' region element. Residue K539 coordinates ATP.

The protein belongs to the class-I aminoacyl-tRNA synthetase family. ValS type 2 subfamily.

It localises to the cytoplasm. It carries out the reaction tRNA(Val) + L-valine + ATP = L-valyl-tRNA(Val) + AMP + diphosphate. Catalyzes the attachment of valine to tRNA(Val). As ValRS can inadvertently accommodate and process structurally similar amino acids such as threonine, to avoid such errors, it has a 'posttransfer' editing activity that hydrolyzes mischarged Thr-tRNA(Val) in a tRNA-dependent manner. In Pyrococcus horikoshii (strain ATCC 700860 / DSM 12428 / JCM 9974 / NBRC 100139 / OT-3), this protein is Valine--tRNA ligase.